We begin with the raw amino-acid sequence, 165 residues long: Histone H1-like protein HC2 (165 aa).

Basic residues-rich tracts occupy residues 1 to 50 and 59 to 80; these read MLGV…KTVA and PVAKKATAKKAPVRKVAAKKTV. The interval 1–80 is disordered; it reads MLGVQKKRST…VRKVAAKKTV (80 aa).

This sequence belongs to the histone H1/H5 family. HCT subfamily.

Might have a role in establishing the nucleoid structure of elementary bodies. The polypeptide is Histone H1-like protein HC2 (hctB) (Chlamydia trachomatis).